Reading from the N-terminus, the 118-residue chain is Large ribosomal subunit protein bL20 (118 aa).

It belongs to the bacterial ribosomal protein bL20 family.

Its function is as follows. Binds directly to 23S ribosomal RNA and is necessary for the in vitro assembly process of the 50S ribosomal subunit. It is not involved in the protein synthesizing functions of that subunit. The polypeptide is Large ribosomal subunit protein bL20 (Francisella tularensis subsp. tularensis (strain WY96-3418)).